The sequence spans 404 residues: cAMP-dependent protein kinase regulatory subunit (404 aa).

The segment at 14–144 is dimerization and phosphorylation; it reads LTDHELLRIP…RLKTAIAGNF (131 aa). The residue at position 105 (Ser105) is a Phosphoserine. Residues 145-276, Glu223, Arg232, 277-398, Glu344, and Arg353 contribute to the 3',5'-cyclic AMP site; these read LFSH…EKFP and CCRH…GVEE.

The protein belongs to the cAMP-dependent kinase regulatory chain family. Tetramer, composed of 2 regulatory (R) and 2 catalytic (C) subunits. In the presence of cAMP it dissociates into 2 active monomeric C subunits and an R dimer.

CAMP-dependent protein kinase PKA regulatory subunit. In Colletotrichum trifolii, this protein is cAMP-dependent protein kinase regulatory subunit (PKAR).